Consider the following 121-residue polypeptide: Small ribosomal subunit protein uS13 (121 aa).

The segment at 91 to 121 (HRRGLPVRGQNSKNNARTRKGPRRTVANKKK) is disordered. Over residues 106–121 (ARTRKGPRRTVANKKK) the composition is skewed to basic residues.

This sequence belongs to the universal ribosomal protein uS13 family. Part of the 30S ribosomal subunit. Forms a loose heterodimer with protein S19. Forms two bridges to the 50S subunit in the 70S ribosome.

Its function is as follows. Located at the top of the head of the 30S subunit, it contacts several helices of the 16S rRNA. In the 70S ribosome it contacts the 23S rRNA (bridge B1a) and protein L5 of the 50S subunit (bridge B1b), connecting the 2 subunits; these bridges are implicated in subunit movement. Contacts the tRNAs in the A and P-sites. This is Small ribosomal subunit protein uS13 from Bacillus mycoides (strain KBAB4) (Bacillus weihenstephanensis).